The sequence spans 432 residues: Interleukin-11 receptor subunit alpha-2 (432 aa).

An N-terminal signal peptide occupies residues Met-1–Ser-23. Over Ser-24–Ala-372 the chain is Extracellular. The Ig-like C2-type domain occupies Pro-27–Gly-110. 3 cysteine pairs are disulfide-bonded: Cys-48–Cys-94, Cys-120–Cys-130, and Cys-170–Cys-180. Fibronectin type-III domains follow at residues Pro-112–Asp-219 and Pro-220–Thr-317. Asn-127 carries an N-linked (GlcNAc...) asparagine glycan. The interval Lys-151 to Cys-170 is disordered. Asn-194 carries an N-linked (GlcNAc...) asparagine glycan. The WSXWS motif motif lies at Trp-304–Ser-308. Residues Ser-373–Leu-393 form a helical membrane-spanning segment. The Cytoplasmic segment spans residues Arg-394–Ser-432.

Belongs to the type I cytokine receptor family. Type 3 subfamily. In terms of assembly, on ligand binding, forms a multimer complex with IL6ST/gp130. Expression restricted to testis, lymph node and thymus. Highest level in testis.

The protein resides in the membrane. Functionally, receptor for interleukin-11. The receptor systems for IL6, LIF, OSM, CNTF, IL11 and CT1 can utilize IL6ST for initiating signal transmission. The IL11/IL11RA/IL6ST complex may be involved in the control of proliferation and/or differentiation of skeletogenic progenitor or other mesenchymal cells. The sequence is that of Interleukin-11 receptor subunit alpha-2 (Il11ra2) from Mus musculus (Mouse).